Here is an 83-residue protein sequence, read N- to C-terminus: Putative beta-neurotoxin RjAa10f (83 aa).

Positions 1–18 are cleaved as a signal peptide; it reads MKILIFIIASFMLIGVWC. An LCN-type CS-alpha/beta domain is found at 19–82; it reads KEGYPMGRDG…VWDPNNNKCV (64 aa). Cystine bridges form between Cys-29–Cys-81, Cys-33–Cys-55, Cys-40–Cys-62, and Cys-44–Cys-64.

This sequence belongs to the long (4 C-C) scorpion toxin superfamily. Sodium channel inhibitor family. Beta subfamily. In terms of tissue distribution, expressed by the venom gland.

It localises to the secreted. Beta toxins bind voltage-independently at site-4 of sodium channels (Nav) and shift the voltage of activation toward more negative potentials thereby affecting sodium channel activation and promoting spontaneous and repetitive firing. This chain is Putative beta-neurotoxin RjAa10f, found in Rhopalurus junceus (Caribbean blue scorpion).